Reading from the N-terminus, the 499-residue chain is Glutamate--tRNA ligase (499 aa).

The 'HIGH' region motif lies at 12–22 (PSPTGHLHIGN). Positions 259-263 (KLSKR) match the 'KMSKS' region motif. ATP is bound at residue Lys-262.

It belongs to the class-I aminoacyl-tRNA synthetase family. Glutamate--tRNA ligase type 1 subfamily. In terms of assembly, monomer.

It is found in the cytoplasm. The catalysed reaction is tRNA(Glu) + L-glutamate + ATP = L-glutamyl-tRNA(Glu) + AMP + diphosphate. Its function is as follows. Catalyzes the attachment of glutamate to tRNA(Glu) in a two-step reaction: glutamate is first activated by ATP to form Glu-AMP and then transferred to the acceptor end of tRNA(Glu). This is Glutamate--tRNA ligase from Lactobacillus gasseri (strain ATCC 33323 / DSM 20243 / BCRC 14619 / CIP 102991 / JCM 1131 / KCTC 3163 / NCIMB 11718 / NCTC 13722 / AM63).